Reading from the N-terminus, the 60-residue chain is Large ribosomal subunit protein uL30 (60 aa).

Belongs to the universal ribosomal protein uL30 family. In terms of assembly, part of the 50S ribosomal subunit.

The protein is Large ribosomal subunit protein uL30 of Lactiplantibacillus plantarum (strain ATCC BAA-793 / NCIMB 8826 / WCFS1) (Lactobacillus plantarum).